The primary structure comprises 426 residues: Glutamate-1-semialdehyde 2,1-aminomutase (426 aa).

Lys267 is modified (N6-(pyridoxal phosphate)lysine).

Belongs to the class-III pyridoxal-phosphate-dependent aminotransferase family. HemL subfamily. As to quaternary structure, homodimer. The cofactor is pyridoxal 5'-phosphate.

The protein resides in the cytoplasm. The enzyme catalyses (S)-4-amino-5-oxopentanoate = 5-aminolevulinate. It functions in the pathway porphyrin-containing compound metabolism; protoporphyrin-IX biosynthesis; 5-aminolevulinate from L-glutamyl-tRNA(Glu): step 2/2. The polypeptide is Glutamate-1-semialdehyde 2,1-aminomutase (Bdellovibrio bacteriovorus (strain ATCC 15356 / DSM 50701 / NCIMB 9529 / HD100)).